We begin with the raw amino-acid sequence, 290 residues long: D-tagatose 3-epimerase (290 aa).

C66 serves as a coordination point for substrate. E152 functions as the Proton donor/acceptor in the catalytic mechanism. E152 contacts Mn(2+). Substrate is bound by residues E158 and 185–188 (DTFH). The Mn(2+) site is built by D185 and H211. Position 217 (R217) interacts with substrate. E246 functions as the Proton donor/acceptor in the catalytic mechanism. E246 is a Mn(2+) binding site.

This sequence belongs to the hyi family. As to quaternary structure, homodimer. Mn(2+) serves as cofactor.

It catalyses the reaction keto-D-tagatose = keto-D-sorbose. It carries out the reaction D-allulose = keto-D-fructose. The catalysed reaction is D-ribulose = D-xylulose. With respect to regulation, strongly inhibited (about 90% of the enzyme activity) by Ag(+), Hg(2+) and p-chloromercuribenzoic acid. Cu(2+) and Zn(2+) inhibit about 60% of the enzyme activity. Catalyzes the epimerization of various ketoses at the C(3) position. It is able to interconvert D-tagatose and D-ribulose to D-sorbose and D-xylulose, respectively. The enzyme is also able to accept other ketopentoses such as D-psicose with lower efficiency. The chain is D-tagatose 3-epimerase from Pseudomonas cichorii.